The primary structure comprises 105 residues: RNQPTAALGHLLPEGTPVPLIPVLIIIETISLFIRPLALGVRLTANLTAGHLLIQLIATAAFVLLPMMPTVAILTSIVLFLLTLLEIAVAMIQAYVFVLLLSLYL.

Helical transmembrane passes span 14–34, 47–67, and 72–92; these read EGTP…SLFI, LTAG…LLPM, and AILT…VAMI.

Belongs to the ATPase A chain family. In terms of assembly, component of the ATP synthase complex composed at least of ATP5F1A/subunit alpha, ATP5F1B/subunit beta, ATP5MC1/subunit c (homooctomer), MT-ATP6/subunit a, MT-ATP8/subunit 8, ATP5ME/subunit e, ATP5MF/subunit f, ATP5MG/subunit g, ATP5MK/subunit k, ATP5MJ/subunit j, ATP5F1C/subunit gamma, ATP5F1D/subunit delta, ATP5F1E/subunit epsilon, ATP5PF/subunit F6, ATP5PB/subunit b, ATP5PD/subunit d, ATP5PO/subunit OSCP. ATP synthase complex consists of a soluble F(1) head domain (subunits alpha(3) and beta(3)) - the catalytic core - and a membrane F(0) domain - the membrane proton channel (subunits c, a, 8, e, f, g, k and j). These two domains are linked by a central stalk (subunits gamma, delta, and epsilon) rotating inside the F1 region and a stationary peripheral stalk (subunits F6, b, d, and OSCP). Interacts with DNAJC30; interaction is direct.

It localises to the mitochondrion inner membrane. The enzyme catalyses H(+)(in) = H(+)(out). Subunit a, of the mitochondrial membrane ATP synthase complex (F(1)F(0) ATP synthase or Complex V) that produces ATP from ADP in the presence of a proton gradient across the membrane which is generated by electron transport complexes of the respiratory chain. ATP synthase complex consist of a soluble F(1) head domain - the catalytic core - and a membrane F(1) domain - the membrane proton channel. These two domains are linked by a central stalk rotating inside the F(1) region and a stationary peripheral stalk. During catalysis, ATP synthesis in the catalytic domain of F(1) is coupled via a rotary mechanism of the central stalk subunits to proton translocation. With the subunit c (ATP5MC1), forms the proton-conducting channel in the F(0) domain, that contains two crucial half-channels (inlet and outlet) that facilitate proton movement from the mitochondrial intermembrane space (IMS) into the matrix. Protons are taken up via the inlet half-channel and released through the outlet half-channel, following a Grotthuss mechanism. In Salmo trutta (Brown trout), this protein is ATP synthase F(0) complex subunit a.